The following is a 438-amino-acid chain: Glutamyl-tRNA(Gln) amidotransferase subunit D (438 aa).

In terms of domain architecture, Asparaginase/glutaminase spans 91–421 (KNLSILSTGG…SEIYEIMKTN (331 aa)). Active-site residues include T101, T177, D178, and K254.

The protein belongs to the asparaginase 1 family. GatD subfamily. As to quaternary structure, heterodimer of GatD and GatE.

The catalysed reaction is L-glutamyl-tRNA(Gln) + L-glutamine + ATP + H2O = L-glutaminyl-tRNA(Gln) + L-glutamate + ADP + phosphate + H(+). Its function is as follows. Allows the formation of correctly charged Gln-tRNA(Gln) through the transamidation of misacylated Glu-tRNA(Gln) in organisms which lack glutaminyl-tRNA synthetase. The reaction takes place in the presence of glutamine and ATP through an activated gamma-phospho-Glu-tRNA(Gln). The GatDE system is specific for glutamate and does not act on aspartate. The sequence is that of Glutamyl-tRNA(Gln) amidotransferase subunit D from Methanosphaera stadtmanae (strain ATCC 43021 / DSM 3091 / JCM 11832 / MCB-3).